The chain runs to 354 residues: Uroporphyrinogen decarboxylase (354 aa).

Substrate-binding positions include 27–31 (RQAGR), Phe46, Asp77, Tyr154, Ser209, and His327.

It belongs to the uroporphyrinogen decarboxylase family. As to quaternary structure, homodimer.

The protein localises to the cytoplasm. The catalysed reaction is uroporphyrinogen III + 4 H(+) = coproporphyrinogen III + 4 CO2. It participates in porphyrin-containing compound metabolism; protoporphyrin-IX biosynthesis; coproporphyrinogen-III from 5-aminolevulinate: step 4/4. Catalyzes the decarboxylation of four acetate groups of uroporphyrinogen-III to yield coproporphyrinogen-III. This Shewanella oneidensis (strain ATCC 700550 / JCM 31522 / CIP 106686 / LMG 19005 / NCIMB 14063 / MR-1) protein is Uroporphyrinogen decarboxylase.